Here is a 382-residue protein sequence, read N- to C-terminus: MAEQANQPTVLQKFGGQFHLGSSFSEGVRARNICPSVSSYDRRFTTRSYMTQGLVNGGINVPMMSSSPIFANAPAEKGGKNFMIDFLMGGVSAAVSKTAAAPIERVKLLIQNQDEMIKAGRLSEPYKGIGDCFGRTIKDEGFASLWRGNTANVIRYFPTQALNFAFKDYFKRLFNFKKDKDGYWKWFGGNLASGGAAGASSLFFVYSLDYARTRLANDAKAAKGGGERQFNGLVDVYRKTLKSDGIAGLYRGFNISCVGIIVYRGLYFGMYDSLKPVVLTGSLQDNFFASFALGWLITNGAGLASYPIDTVRRRMMMTSGEAVKYKSSMDAFSQILKNEGAKSLFKGAGANILRAIAGAGVLSGYDQLQILFFGKKYGSGGA.

A mitochondrion-targeting transit peptide spans 1-71; that stretch reads MAEQANQPTV…PMMSSSPIFA (71 aa). 3 Solcar repeats span residues 80–173, 185–277, and 285–371; these read KNFM…FKRL, KWFG…LKPV, and DNFF…LQIL. 5 consecutive transmembrane segments (helical) span residues 82–109, 150–174, 183–203, 253–274, and 288–308; these read FMID…VKLL, TANV…KRLF, YWKW…SSLF, FNIS…YDSL, and FASF…SYPI. ADP is bound by residues Arg-155 and Lys-167. Arg-312 provides a ligand contact to ADP. The tract at residues 312–317 is important for transport activity; sequence RRRMMM. The Nucleotide carrier signature motif motif lies at 312-317; it reads RRRMMM. The helical transmembrane segment at 348–368 threads the bilayer; the sequence is AGANILRAIAGAGVLSGYDQL.

Belongs to the mitochondrial carrier (TC 2.A.29) family. In terms of assembly, monomer.

The protein localises to the mitochondrion inner membrane. The catalysed reaction is ADP(in) + ATP(out) = ADP(out) + ATP(in). Its activity is regulated as follows. The matrix-open state (m-state) is inhibited by the membrane-permeable bongkrekic acid (BKA). The cytoplasmic-open state (c-state) is inhibited by the membrane-impermeable toxic inhibitor carboxyatractyloside (CATR). Its function is as follows. ADP:ATP antiporter that mediates import of ADP into the mitochondrial matrix for ATP synthesis, and export of ATP out to fuel the cell. Cycles between the cytoplasmic-open state (c-state) and the matrix-open state (m-state): operates by the alternating access mechanism with a single substrate-binding site intermittently exposed to either the cytosolic (c-state) or matrix (m-state) side of the inner mitochondrial membrane. This Oryza sativa subsp. japonica (Rice) protein is ADP,ATP carrier protein, mitochondrial.